A 150-amino-acid chain; its full sequence is Large ribosomal subunit protein uL15 (150 aa).

Residues 1–55 (MADNEILQMHDLKPAPGAKKDRTRVGRGEGSKGKTAGRGAKGQTKRNHVRPGFEG) are disordered. Over residues 8–32 (QMHDLKPAPGAKKDRTRVGRGEGSK) the composition is skewed to basic and acidic residues.

It belongs to the universal ribosomal protein uL15 family. Part of the 50S ribosomal subunit.

In terms of biological role, binds to the 23S rRNA. In Bifidobacterium longum (strain DJO10A), this protein is Large ribosomal subunit protein uL15.